The sequence spans 134 residues: Translation initiation factor 2 subunit beta (134 aa).

The protein belongs to the eIF-2-beta/eIF-5 family. As to quaternary structure, heterotrimer composed of an alpha, a beta and a gamma chain.

Its function is as follows. eIF-2 functions in the early steps of protein synthesis by forming a ternary complex with GTP and initiator tRNA. This chain is Translation initiation factor 2 subunit beta, found in Pyrobaculum arsenaticum (strain DSM 13514 / JCM 11321 / PZ6).